A 367-amino-acid polypeptide reads, in one-letter code: UDP-N-acetylglucosamine--N-acetylmuramyl-(pentapeptide) pyrophosphoryl-undecaprenol N-acetylglucosamine transferase (367 aa).

Residues 15–17 (TGG), Asn127, Arg163, Ser191, Ile249, and Gln294 contribute to the UDP-N-acetyl-alpha-D-glucosamine site.

This sequence belongs to the glycosyltransferase 28 family. MurG subfamily.

It is found in the cell inner membrane. It catalyses the reaction di-trans,octa-cis-undecaprenyl diphospho-N-acetyl-alpha-D-muramoyl-L-alanyl-D-glutamyl-meso-2,6-diaminopimeloyl-D-alanyl-D-alanine + UDP-N-acetyl-alpha-D-glucosamine = di-trans,octa-cis-undecaprenyl diphospho-[N-acetyl-alpha-D-glucosaminyl-(1-&gt;4)]-N-acetyl-alpha-D-muramoyl-L-alanyl-D-glutamyl-meso-2,6-diaminopimeloyl-D-alanyl-D-alanine + UDP + H(+). Its pathway is cell wall biogenesis; peptidoglycan biosynthesis. In terms of biological role, cell wall formation. Catalyzes the transfer of a GlcNAc subunit on undecaprenyl-pyrophosphoryl-MurNAc-pentapeptide (lipid intermediate I) to form undecaprenyl-pyrophosphoryl-MurNAc-(pentapeptide)GlcNAc (lipid intermediate II). The chain is UDP-N-acetylglucosamine--N-acetylmuramyl-(pentapeptide) pyrophosphoryl-undecaprenol N-acetylglucosamine transferase from Burkholderia cenocepacia (strain HI2424).